An 84-amino-acid chain; its full sequence is MAHKKGGGSTKNGRDSNPKYLGVKAAGGSTVAAGTIILRQRGTVIKPGMNAGLGRDHTIFALIDGVVTFRNGRNNKKQVNILPC.

The segment at 1 to 21 (MAHKKGGGSTKNGRDSNPKYL) is disordered.

This sequence belongs to the bacterial ribosomal protein bL27 family.

The chain is Large ribosomal subunit protein bL27 from Pelodictyon phaeoclathratiforme (strain DSM 5477 / BU-1).